A 991-amino-acid polypeptide reads, in one-letter code: 5'-3' exoribonuclease 2 (991 aa).

The Nuclear localization signal signature appears at 264 to 268 (TKKTK). The span at 404–418 (RRNENYRRRQQRESN) shows a compositional bias: basic and acidic residues. 3 disordered regions span residues 404–461 (RRNE…TQKI), 547–582 (SIES…ENTD), and 872–991 (AERS…NGYY). The segment covering 433–452 (SVETQSTEVVTSSKSTSVDT) has biased composition (low complexity). Composition is skewed to low complexity over residues 878 to 889 (SRRNNGNSYRGG) and 896 to 910 (RRSY…RQSY). A compositionally biased stretch (polar residues) spans 926 to 938 (WSGNGNFPRSNAS). The span at 946 to 958 (EGYGGRSRGGGYS) shows a compositional bias: gly residues. A compositionally biased stretch (polar residues) spans 980-991 (ESYNNNNRNGYY).

Belongs to the 5'-3' exonuclease family. XRN2/RAT1 subfamily. As to quaternary structure, interacts with din1/rai1; the interaction is direct, stabilizes dhp1 protein structure and may stimulate its exoribonuclease activity. The interaction also stimulates din1 pyrophosphohydrolase activity, probably by recruiting it to mRNA substrates.

It localises to the nucleus. Possesses 5'-&gt;3' exoribonuclease activity. Required for the processing of nuclear mRNA and rRNA precursors. May promote the termination of transcription by RNA polymerase II. Essential for vegetative cell growth and chromosome segregation. The chain is 5'-3' exoribonuclease 2 (dhp1) from Schizosaccharomyces pombe (strain 972 / ATCC 24843) (Fission yeast).